The chain runs to 274 residues: Sulfur carrier protein FdhD (274 aa).

Catalysis depends on Cys121, which acts as the Cysteine persulfide intermediate. Position 258–263 (Phe258–Arg263) interacts with Mo-bis(molybdopterin guanine dinucleotide).

Belongs to the FdhD family.

The protein resides in the cytoplasm. Required for formate dehydrogenase (FDH) activity. Acts as a sulfur carrier protein that transfers sulfur from IscS to the molybdenum cofactor prior to its insertion into FDH. This is Sulfur carrier protein FdhD from Yersinia pseudotuberculosis serotype O:3 (strain YPIII).